The primary structure comprises 113 residues: Protein ORF3 (113 aa).

2 hydrophobic regions span residues 1-21 and 32-52; these read MGSPCALGLFCCCSSCFCLCC and AVVGGAAAVPAVVSGVTGLIL. An interaction with host HPX region spans residues 27 to 67; the sequence is ASRLAAVVGGAAAVPAVVSGVTGLILSPSPSPIFIQPTPSP. The segment at 47 to 71 is interaction with the capsid protein; it reads VTGLILSPSPSPIFIQPTPSPPMSF. Residue Ser70 is modified to Phosphoserine; by host. The segment at 71 to 113 is homodimerization, and interaction with host AMBP/bikunin; it reads FHNPGLELALDSRPAPLXPLGVTSPSAPPLPPVVDLPQLGLRR. The disordered stretch occupies residues 90-113; it reads LGVTSPSAPPLPPVVDLPQLGLRR. The segment at 94–103 is interaction with host SRC, HCK, FYN, PIK3R3 and GRB2; sequence SPSAPPLPPV. Residues 95–98 carry the PTAP/PSAP motif motif; that stretch reads PSAP.

Belongs to the hepevirus ORF3 protein family. In terms of assembly, forms homooligomers. Interacts with host SRC, HCK, FYN, PIK3R3 and GRB2 (via SH3 domain); binding does not activate the kinases. Interacts with host AMBP/bikunin and AMBP/alpha-1-microglobulin peptides. Interacts with host HPX/hemopexin. Interacts (when phosphorylated) with capsid protein ORF2. Interacts with host TSG101; this interaction plays a role in viral release from the host cell. Interacts with host SIRPA; this interaction down-regulates the phosphorylation of host IRF3. Palmitoylated in the N-terminus.

It localises to the host endoplasmic reticulum membrane. The protein resides in the host cytoplasm. Its subcellular location is the host cytoskeleton. The protein localises to the virion. It is found in the host cell membrane. Small multifunctional phosphoprotein involved in virion morphogenesis, egress and counteracting host innate immunity. Plays critical roles in the final steps of viral release by interacting with host TSG101, a member of the vacuolar protein-sorting pathway and using other cellular host proteins involved in vesicle formation pathway. Also acts as a viroporin and forms ion conductive pores allowing viral particle release. Impairs the generation of type I interferon by down-regulating host TLR3 and TLR7 as well as their downstream signaling pathways. Down-regulates the phosphorylation of host IRF3 via the interaction with host SIRP-alpha, thereby inhibiting IFN-I expression. Interacts with host microtubules. This chain is Protein ORF3, found in Hepatitis E virus genotype 3 (isolate Human/United States/US2) (HEV-3).